Reading from the N-terminus, the 420-residue chain is MKHKSEFLNFIQERGYLYQCTNIDRLDQLLSQDNYIIAYIGFDCTAPSLHIGSLIQIMMLRHLQKFGYKPIVLLGGGTTKIGDPSGKDKARSVLPIEDINQNILGIKKTLEKMISFDYGKTGAIIVNNADWLDNIKYIDFLRDIGTHFSVNRMLGFDSVKIRLDREQNLSFLEFNYMLLQAYDFVELNKKYGCRFQIGGSDQWGNIVNGIELSKKLNLPELFGLTTPLLLNAQGKKMGKTESGAVWLDGSMLNSYDYWQYFRNVDDQDVGRFLRLFTDLPIDEIKKLESLKDQETNEAKKVLATEVTKICHGCKEAELARSAAISAFENEDSSLLSGYTITKEQIANGIPLIDLLYDTGFEPSKGAAKRLIQGNGCKVNDNTINDVNYTINSESFKGQPFIKLSAGKKRHIKILVSEVRK.

An L-tyrosine-binding site is contributed by Tyr-39. Residues 44 to 53 carry the 'HIGH' region motif; it reads CTAPSLHIGS. 2 residues coordinate L-tyrosine: Tyr-176 and Gln-180. The short motif at 236–240 is the 'KMSKS' region element; sequence KMGKT. Lys-239 contributes to the ATP binding site. One can recognise an S4 RNA-binding domain in the interval 349–414; the sequence is IPLIDLLYDT…AGKKRHIKIL (66 aa).

Belongs to the class-I aminoacyl-tRNA synthetase family. TyrS type 1 subfamily. Homodimer.

It is found in the cytoplasm. It carries out the reaction tRNA(Tyr) + L-tyrosine + ATP = L-tyrosyl-tRNA(Tyr) + AMP + diphosphate + H(+). Functionally, catalyzes the attachment of tyrosine to tRNA(Tyr) in a two-step reaction: tyrosine is first activated by ATP to form Tyr-AMP and then transferred to the acceptor end of tRNA(Tyr). This Wolbachia pipientis subsp. Culex pipiens (strain wPip) protein is Tyrosine--tRNA ligase.